The chain runs to 208 residues: Imidazoleglycerol-phosphate dehydratase (208 aa).

The protein belongs to the imidazoleglycerol-phosphate dehydratase family.

Its subcellular location is the cytoplasm. It catalyses the reaction D-erythro-1-(imidazol-4-yl)glycerol 3-phosphate = 3-(imidazol-4-yl)-2-oxopropyl phosphate + H2O. The protein operates within amino-acid biosynthesis; L-histidine biosynthesis; L-histidine from 5-phospho-alpha-D-ribose 1-diphosphate: step 6/9. This chain is Imidazoleglycerol-phosphate dehydratase, found in Pseudarthrobacter chlorophenolicus (strain ATCC 700700 / DSM 12829 / CIP 107037 / JCM 12360 / KCTC 9906 / NCIMB 13794 / A6) (Arthrobacter chlorophenolicus).